Consider the following 345-residue polypeptide: MHHNVFTNNPTVPIDVKNRSVSELMDGMLKTGFQGRKLAESVQAWNNMLKEKNTTVFMGLSGAMVPAGMRRIISHMIRERMIDCLVSTGANLFHDCHEALGRKHYVGSHLANDEKLFEQGVDRIYDIFAVEEEFRTADNLIADFAQEIGEITCSSREFMYLLGKELGRRGAAEDSIVVSAYRHNVPIFVPALSDSSIGIGLTIARRRGLKLEIDQIKDVDEITQIVEKSERTGVVYVGGGVPKNFIQQTEVIASILGMDIGGHDYAIQYTSDSPHWGGLSGCTFDEAVSWGKIAPQAKKVQVFVDATIALPIVAHALHEKTHDLKRIAPVFFWDGPEGLAIDYKE.

The active-site Nucleophile is the Lys292.

Belongs to the deoxyhypusine synthase family. NAD(+) is required as a cofactor.

The enzyme catalyses [eIF5A protein]-L-lysine + spermidine = [eIF5A protein]-deoxyhypusine + propane-1,3-diamine. It participates in protein modification; eIF5A hypusination. Its function is as follows. Catalyzes the NAD-dependent oxidative cleavage of spermidine and the subsequent transfer of the butylamine moiety of spermidine to the epsilon-amino group of a specific lysine residue of the eIF-5A precursor protein to form the intermediate deoxyhypusine residue. The polypeptide is Probable deoxyhypusine synthase 2 (dys2) (Methanosarcina acetivorans (strain ATCC 35395 / DSM 2834 / JCM 12185 / C2A)).